The primary structure comprises 180 residues: uncharacterized protein (180 aa).

Helical transmembrane passes span 4 to 24, 25 to 45, 57 to 77, 81 to 101, 124 to 144, and 156 to 176; these read KSNI…LSLF, IKNF…WLFI, NLLA…GIIY, FLDI…GILF, FLTL…LLIL, and IIRT…FYTF.

It is found in the cell membrane. This is an uncharacterized protein from Methanocaldococcus jannaschii (strain ATCC 43067 / DSM 2661 / JAL-1 / JCM 10045 / NBRC 100440) (Methanococcus jannaschii).